The following is a 206-amino-acid chain: Dephospho-CoA kinase (206 aa).

The region spanning 6–206 (IIGLTGGIAS…KWKWKDWSKK (201 aa)) is the DPCK domain. Position 14 to 19 (14 to 19 (ASGKST)) interacts with ATP.

The protein belongs to the CoaE family.

The protein resides in the cytoplasm. The catalysed reaction is 3'-dephospho-CoA + ATP = ADP + CoA + H(+). The protein operates within cofactor biosynthesis; coenzyme A biosynthesis; CoA from (R)-pantothenate: step 5/5. Its function is as follows. Catalyzes the phosphorylation of the 3'-hydroxyl group of dephosphocoenzyme A to form coenzyme A. In Carboxydothermus hydrogenoformans (strain ATCC BAA-161 / DSM 6008 / Z-2901), this protein is Dephospho-CoA kinase.